Consider the following 570-residue polypeptide: Potassium-transporting ATPase potassium-binding subunit (570 aa).

A run of 11 helical transmembrane segments spans residues 7–27 (AEIA…GVFL), 65–85 (AYAL…YAVL), 95–115 (PQGF…SFIT), 135–155 (LVLT…AAAL), 179–199 (LYLL…LGLP), 254–274 (LTNL…FFAF), 286–306 (ALVI…YATE), 383–403 (GVAI…LMVG), 422–442 (ILAV…AAVL), 489–509 (LGIA…AIAG), and 528–548 (GGLF…LQFF).

Belongs to the KdpA family. As to quaternary structure, the system is composed of three essential subunits: KdpA, KdpB and KdpC.

It localises to the cell inner membrane. In terms of biological role, part of the high-affinity ATP-driven potassium transport (or Kdp) system, which catalyzes the hydrolysis of ATP coupled with the electrogenic transport of potassium into the cytoplasm. This subunit binds the periplasmic potassium ions and delivers the ions to the membrane domain of KdpB through an intramembrane tunnel. This is Potassium-transporting ATPase potassium-binding subunit from Caulobacter vibrioides (strain ATCC 19089 / CIP 103742 / CB 15) (Caulobacter crescentus).